The chain runs to 441 residues: Histidinol dehydrogenase (441 aa).

The substrate site is built by T240, Q262, and H265. Zn(2+) contacts are provided by Q262 and H265. Active-site proton acceptor residues include E332 and H333. Substrate contacts are provided by H333, D366, E420, and H425. Zn(2+) is bound at residue D366. H425 provides a ligand contact to Zn(2+).

It belongs to the histidinol dehydrogenase family. Zn(2+) is required as a cofactor.

It carries out the reaction L-histidinol + 2 NAD(+) + H2O = L-histidine + 2 NADH + 3 H(+). It participates in amino-acid biosynthesis; L-histidine biosynthesis; L-histidine from 5-phospho-alpha-D-ribose 1-diphosphate: step 9/9. In terms of biological role, catalyzes the sequential NAD-dependent oxidations of L-histidinol to L-histidinaldehyde and then to L-histidine. The chain is Histidinol dehydrogenase from Streptomyces avermitilis (strain ATCC 31267 / DSM 46492 / JCM 5070 / NBRC 14893 / NCIMB 12804 / NRRL 8165 / MA-4680).